The sequence spans 597 residues: Glypican-3 (597 aa).

The first 24 residues, 1-24 (MAGTVRTACLLVAMLLGLGCLGQA), serve as a signal peptide directing secretion. Glutamine 25 is subject to Pyrrolidone carboxylic acid. Cystine bridges form between cysteine 34/cysteine 71, cysteine 64/cysteine 261, cysteine 72/cysteine 264, cysteine 196/cysteine 348, cysteine 251/cysteine 284, cysteine 273/cysteine 421, and cysteine 277/cysteine 409. N-linked (GlcNAc...) asparagine glycosylation is found at asparagine 123 and asparagine 240. Serine 351 bears the Phosphoserine mark. N-linked (GlcNAc...) asparagine glycosylation occurs at asparagine 417. 2 O-linked (Xyl...) (glycosaminoglycan) serine glycosylation sites follow: serine 494 and serine 508. Residues 533–553 (DAPGNKQHGNQKDNEITTSHS) are disordered.

It belongs to the glypican family. Heterodimer; disulfide-linked. Cleavage by a furin-like convertase results in production of alpha and beta chains which form a disulfide-linked heterodimer. Interacts with DPP4. Interacts with FGF2. Interacts with WNT5A. Also interacts with WNT3A and WNT7B. Interacts with hedgehog protein SHH; the heparan sulfate chains are not required for the interaction. Also interacts with hedgehog protein IHH. Interacts with CD81. Interacts with Wnt receptors FZD4, FZD7 and FZD8; the heparan sulfate chains are required for the interaction. O-glycosylated; contains heparan sulfate and/or chondroitin sulfate. Post-translationally, cleaved intracellularly by a furin-like convertase to generate 2 subunits, alpha and beta, which remain associated through disulfide bonds and are associated with the cell surface via the GPI-anchor. This processing is essential for its role in inhibition of hedgehog signaling. A second proteolytic event may result in cleavage of the protein on the cell surface, separating it from the GPI-anchor and leading to its shedding from the cell surface.

It localises to the cell membrane. Cell surface proteoglycan. Negatively regulates the hedgehog signaling pathway when attached via the GPI-anchor to the cell surface by competing with the hedgehog receptor PTC1 for binding to hedgehog proteins. Binding to the hedgehog protein SHH triggers internalization of the complex by endocytosis and its subsequent lysosomal degradation. Positively regulates the canonical Wnt signaling pathway by binding to the Wnt receptor Frizzled and stimulating the binding of the Frizzled receptor to Wnt ligands. Positively regulates the non-canonical Wnt signaling pathway. Binds to CD81 which decreases the availability of free CD81 for binding to the transcriptional repressor HHEX, resulting in nuclear translocation of HHEX and transcriptional repression. Inhibits the dipeptidyl peptidase activity of DPP4. Plays a role in limb patterning and skeletal development by controlling the cellular response to BMP4. Modulates the effects of growth factors BMP2, BMP7 and FGF7 on renal branching morphogenesis. Required for coronary vascular development. Plays a role in regulating cell movements during gastrulation. This is Glypican-3 (Gpc3) from Rattus norvegicus (Rat).